Reading from the N-terminus, the 159-residue chain is Transcription elongation factor GreA (159 aa).

The stretch at 14–76 forms a coiled coil; that stretch reads VKKLEEELEY…QLENMLRNAN (63 aa).

This sequence belongs to the GreA/GreB family.

Functionally, necessary for efficient RNA polymerase transcription elongation past template-encoded arresting sites. The arresting sites in DNA have the property of trapping a certain fraction of elongating RNA polymerases that pass through, resulting in locked ternary complexes. Cleavage of the nascent transcript by cleavage factors such as GreA or GreB allows the resumption of elongation from the new 3'terminus. GreA releases sequences of 2 to 3 nucleotides. The protein is Transcription elongation factor GreA of Clostridium novyi (strain NT).